The following is a 44-amino-acid chain: Thrombin-like enzyme F202 (44 aa).

The region spanning 1-44 is the Peptidase S1 domain; sequence VVGGDECNINEHRFLVALYANSSLLCGGTLINQEWVLIAAHCDR. C26 and C42 are disulfide-bonded. Residue H41 is the Charge relay system of the active site.

Belongs to the peptidase S1 family. Snake venom subfamily. Monomer. Contains 6 disulfide bonds. As to expression, expressed by the venom gland.

It localises to the secreted. With respect to regulation, enzyme activity is markedly inhibited by TLCK and PMSF, and moderately by SBTi. Platelet aggregating activity is strongly inhibited by TLCK. Its function is as follows. Thrombin-like snake venom serine protease that coagulates fibrinogen by inducing a fast degradation of the alpha chain (FGA) from human citrated plasma, and a slow degradation of beta chain (FGB). Potently induces platelet aggregation in both platelet rich plasma and washed platelet preparations in a concentration-dependent fashion. Shows amidolytic activities. The polypeptide is Thrombin-like enzyme F202 (Crotalus durissus cascavella (Northeastern Brazilian rattlesnake)).